The primary structure comprises 242 residues: Intraflagellar transport-associated protein (242 aa).

Position 57 is a phosphoserine (Ser-57).

Interacts with IFT122; the interaction associates IFTAP with IFT-A complex.

Its function is as follows. Seems to play a role in ciliary BBSome localization, maybe through interaction with IFT-A complex. In Bos taurus (Bovine), this protein is Intraflagellar transport-associated protein (IFTAP).